Here is a 316-residue protein sequence, read N- to C-terminus: L-lactate dehydrogenase (316 aa).

NAD(+) is bound by residues valine 15, aspartate 37, lysine 42, tyrosine 68, and 82–83; that span reads GL. Residues glutamine 85, arginine 91, and 123 to 126 each bind substrate; that span reads NPVD. NAD(+)-binding positions include 121 to 123 and threonine 146; that span reads ASN. Residue 151-154 coordinates substrate; the sequence is DTSR. 2 residues coordinate beta-D-fructose 1,6-bisphosphate: arginine 156 and histidine 171. Histidine 178 serves as the catalytic Proton acceptor. At tyrosine 222 the chain carries Phosphotyrosine. Residue threonine 231 coordinates substrate.

This sequence belongs to the LDH/MDH superfamily. LDH family. As to quaternary structure, homotetramer.

It is found in the cytoplasm. The catalysed reaction is (S)-lactate + NAD(+) = pyruvate + NADH + H(+). The protein operates within fermentation; pyruvate fermentation to lactate; (S)-lactate from pyruvate: step 1/1. Allosterically activated by fructose 1,6-bisphosphate (FBP). Its function is as follows. Catalyzes the conversion of lactate to pyruvate. The sequence is that of L-lactate dehydrogenase from Borrelia garinii subsp. bavariensis (strain ATCC BAA-2496 / DSM 23469 / PBi) (Borreliella bavariensis).